We begin with the raw amino-acid sequence, 466 residues long: MSIASVASVFKGEHAVGSQVTVRGWVRTRRDSKAGISFLAVYDGSCFDPIQGVLPNSLANYNDDVLKLTAGCSVVMTGEVVASPGAGQAFELQVTEIVVTGFVDDPDTYPMSAKRHSIEHLRELAHLRPRTNIIGAVARVRNCLSQAIHRFYHQEGFIWVSTPLITASDCEGAGEMFRVSTLDMENLPRTAEGKVDYDKDFFGKESFLTVSGQLNAETYACALSKVYTFGPTFRAENSNTTRHLAEFWMVEPEVAFATLDDAAELAEKMLKFAFSAVLEERMDDLNFFNERVDKTVIERLQAFVSSDFAQVDYTDAVEILKNCGKKFEFAVEWGIDLQSEHERYLAEEHFKAPVVVKNYPKDIKAFYMRLNDDGKTVAAMDVLAPGIGEIIGGAQREERLDVLDARLAEMDLSQEDYWWYRDLRRYGTVPHSGFGLGFERLVSYVTGVNNIRDVIPFPRAPRSASF.

It belongs to the class-II aminoacyl-tRNA synthetase family. Homodimer.

It is found in the cytoplasm. The enzyme catalyses tRNA(Asn) + L-asparagine + ATP = L-asparaginyl-tRNA(Asn) + AMP + diphosphate + H(+). The protein is Asparagine--tRNA ligase of Shewanella frigidimarina (strain NCIMB 400).